A 288-amino-acid polypeptide reads, in one-letter code: Small ribosomal subunit protein uS3 (288 aa).

The region spanning 39 to 107 (VREYLKAKLK…PVAVNIEEVR (69 aa)) is the KH type-2 domain. The tract at residues 209 to 288 (GRNDLPAAET…AAAAADGKGE (80 aa)) is disordered. Residues 219–238 (PRPEEERRPRGPRRDGRPGD) show a composition bias toward basic and acidic residues. Low complexity predominate over residues 277 to 288 (APAAAAADGKGE).

It belongs to the universal ribosomal protein uS3 family. As to quaternary structure, part of the 30S ribosomal subunit. Forms a tight complex with proteins S10 and S14.

Its function is as follows. Binds the lower part of the 30S subunit head. Binds mRNA in the 70S ribosome, positioning it for translation. The polypeptide is Small ribosomal subunit protein uS3 (Acidovorax sp. (strain JS42)).